The following is a 428-amino-acid chain: Sporulation kinase B (428 aa).

Over 1–6 the chain is Cytoplasmic; sequence MEILKD. A helical membrane pass occupies residues 7-27; it reads YLLHICFILFPILLYQVFWLG. Residues 28–37 lie on the Extracellular side of the membrane; sequence KPAILVPKIN. A helical transmembrane segment spans residues 38–58; the sequence is SGLVTLFACGASVLCIIFPIH. The Cytoplasmic portion of the chain corresponds to 59-68; that stretch reads EMDYIQYGLQ. Residues 69–89 traverse the membrane as a helical segment; it reads MIPVIICLFYISTASGLTVAA. Residues 90 to 99 are Extracellular-facing; sequence SVLCFELLFY. Residues 100-120 traverse the membrane as a helical segment; sequence EPSAMFVFTLLPFLIIIPILF. Residues 121-132 lie on the Cytoplasmic side of the membrane; sequence QKKWPFMSKAKK. The helical transmembrane segment at 133–153 threads the bilayer; it reads LLLSLLISCVEIFLFFASSWI. At 154-166 the chain is on the extracellular side; it reads LSALNILNFQKSG. Residues 167 to 187 traverse the membrane as a helical segment; the sequence is IFVYEAAVSGLFRSSVLLLSI. The Cytoplasmic segment spans residues 188–428; it reads YIIESIAENI…TIKLPADLPH (241 aa). The Histidine kinase domain maps to 218-426; sequence SVAHEVRNPL…TVTIKLPADL (209 aa). At His221 the chain carries Phosphohistidine; by autocatalysis.

Its subcellular location is the cell membrane. It carries out the reaction ATP + protein L-histidine = ADP + protein N-phospho-L-histidine.. Its function is as follows. Phosphorylates the sporulation-regulatory proteins spo0A and spo0F. Spo0F is required for the KinB activity. The sequence is that of Sporulation kinase B (kinB) from Bacillus subtilis (strain 168).